The following is a 103-amino-acid chain: 4-amino-4-deoxychorismate mutase (103 aa).

The region spanning 1-92 (MTEQNELQRL…EMCRVEDLVM (92 aa)) is the Chorismate mutase domain.

The catalysed reaction is 4-amino-4-deoxychorismate = 4-amino-4-deoxyprephenate. The protein operates within antibiotic biosynthesis. Its function is as follows. Involved in chloramphenicol biosynthesis. Probably catalyzes the conversion of 4-amino-4-deoxychorismate to 4-amino-4-deoxyprephenate. In Streptomyces venezuelae (strain ATCC 10712 / CBS 650.69 / DSM 40230 / JCM 4526 / NBRC 13096 / PD 04745), this protein is 4-amino-4-deoxychorismate mutase.